A 470-amino-acid polypeptide reads, in one-letter code: Maturase K (470 aa).

Belongs to the intron maturase 2 family. MatK subfamily.

The protein localises to the plastid. It is found in the chloroplast. Usually encoded in the trnK tRNA gene intron. Probably assists in splicing its own and other chloroplast group II introns. The chain is Maturase K from Nypa fruticans (Nypa palm).